Consider the following 227-residue polypeptide: Fibrillarin-like rRNA/tRNA 2'-O-methyltransferase (227 aa).

Residues 86–87 (TT), 105–106 (EF), 130–131 (DA), and 150–153 (DVAQ) each bind S-adenosyl-L-methionine.

Belongs to the methyltransferase superfamily. Fibrillarin family. Interacts with nop5. Component of box C/D small ribonucleoprotein (sRNP) particles that contain rpl7ae, FlpA and nop5, plus a guide RNA. These sRNP particles form homodimers, giving rise to an asymmetric holoenzyme.

In terms of biological role, involved in pre-rRNA and tRNA processing. Utilizes the methyl donor S-adenosyl-L-methionine to catalyze the site-specific 2'-hydroxyl methylation of ribose moieties in rRNA and tRNA. Site specificity is provided by a guide RNA that base pairs with the substrate. Methylation occurs at a characteristic distance from the sequence involved in base pairing with the guide RNA. This is Fibrillarin-like rRNA/tRNA 2'-O-methyltransferase from Pyrococcus furiosus (strain ATCC 43587 / DSM 3638 / JCM 8422 / Vc1).